A 354-amino-acid polypeptide reads, in one-letter code: Probable trehalose-phosphate phosphatase E (354 aa).

It belongs to the trehalose phosphatase family. A divalent metal cation serves as cofactor.

The enzyme catalyses alpha,alpha-trehalose 6-phosphate + H2O = alpha,alpha-trehalose + phosphate. It functions in the pathway glycan biosynthesis; trehalose biosynthesis. Functionally, removes the phosphate from trehalose 6-phosphate to produce free trehalose. Trehalose accumulation in plant may improve abiotic stress tolerance. The polypeptide is Probable trehalose-phosphate phosphatase E (TPPE) (Arabidopsis thaliana (Mouse-ear cress)).